The chain runs to 97 residues: Exodeoxyribonuclease 7 small subunit (97 aa).

The segment at 1-22 is disordered; that stretch reads MAKTASPGDTAAGNGTEPLPDK.

This sequence belongs to the XseB family. Heterooligomer composed of large and small subunits.

The protein resides in the cytoplasm. It catalyses the reaction Exonucleolytic cleavage in either 5'- to 3'- or 3'- to 5'-direction to yield nucleoside 5'-phosphates.. In terms of biological role, bidirectionally degrades single-stranded DNA into large acid-insoluble oligonucleotides, which are then degraded further into small acid-soluble oligonucleotides. The chain is Exodeoxyribonuclease 7 small subunit from Burkholderia vietnamiensis (strain G4 / LMG 22486) (Burkholderia cepacia (strain R1808)).